Here is a 285-residue protein sequence, read N- to C-terminus: Mediator of RNA polymerase II transcription subunit 4 (285 aa).

Low complexity predominate over residues 1–13 (MSTPGPVPSSTSV). The interval 1 to 25 (MSTPGPVPSSTSVATLPFSAQDKTQ) is disordered. Residues 31–115 (ELQSVGIYQD…TREILETLNT (85 aa)) adopt a coiled-coil conformation. A disordered region spans residues 206–285 (DNVNNDNNTS…DLDLFNPDEF (80 aa)). 2 stretches are compositionally biased toward basic and acidic residues: residues 216–250 (KIDE…RRGS) and 257–267 (GKEDSETKSEE). Over residues 268 to 285 (NPDLELDLDLDLFNPDEF) the composition is skewed to acidic residues.

It belongs to the Mediator complex subunit 4 family. As to quaternary structure, component of the Mediator complex.

It is found in the nucleus. Component of the Mediator complex, a coactivator involved in the regulated transcription of nearly all RNA polymerase II-dependent genes. Mediator functions as a bridge to convey information from gene-specific regulatory proteins to the basal RNA polymerase II transcription machinery. Mediator is recruited to promoters by direct interactions with regulatory proteins and serves as a scaffold for the assembly of a functional preinitiation complex with RNA polymerase II and the general transcription factors. This is Mediator of RNA polymerase II transcription subunit 4 (MED4) from Kluyveromyces lactis (strain ATCC 8585 / CBS 2359 / DSM 70799 / NBRC 1267 / NRRL Y-1140 / WM37) (Yeast).